The following is a 121-amino-acid chain: Large ribosomal subunit protein mL52 (121 aa).

Residues 1–22 (MAALGTWLSSVRRLHCSVVARA) constitute a mitochondrion transit peptide. Residues 98–109 (QEERKKEHDLKP) are compositionally biased toward basic and acidic residues. Residues 98–121 (QEERKKEHDLKPKGTLLRSPLPNQ) are disordered.

Belongs to the mitochondrion-specific ribosomal protein mL52 family. As to quaternary structure, component of the mitochondrial ribosome large subunit (39S) which comprises a 16S rRNA and about 50 distinct proteins.

It localises to the mitochondrion. The chain is Large ribosomal subunit protein mL52 (Mrpl52) from Mus musculus (Mouse).